A 421-amino-acid polypeptide reads, in one-letter code: F-box/kelch-repeat protein At1g26930 (421 aa).

The tract at residues 54–73 (TDSSEGEDNGSSSDSGTLIP) is disordered. Residues 70–117 (TLIPGMNRDDSLSCLIRCSRADYCSIASVNRSLRSLIRSGEIYRLRRL) enclose the F-box domain. Kelch repeat units lie at residues 114 to 167 (LRRL…LAVG), 169 to 212 (DLLV…SYGE), 213 to 260 (IAVL…FMDG), 261 to 312 (KFYV…MSAA), and 320 to 366 (AVVN…GLAF).

The polypeptide is F-box/kelch-repeat protein At1g26930 (Arabidopsis thaliana (Mouse-ear cress)).